The chain runs to 1311 residues: Mitogen-activated protein kinase kinase kinase 19 (1311 aa).

7 disordered regions span residues 85–119 (PDPLQEASQEDLKESNQVTSEHQEREQVHPVSPPD), 250–274 (PLSQSAEFSSSKNHQEVTQEGPVEH), 330–363 (SVKEDTTPTERERDSGYHVSEMQRGGEDSQYLSS), 396–472 (MTPA…NPEM), 486–508 (EGTSKGPARAEPHLQRRKRPAQN), 576–607 (HRPHPSSKFQRRAPLTEKKSTHQTQKPKKQAF), and 734–767 (SKDKGCKDMGGHTEDSVSEPDGQMKSPGNDFLSS). Polar residues predominate over residues 250-261 (PLSQSAEFSSSK). Basic and acidic residues-rich tracts occupy residues 262–274 (NHQEVTQEGPVEH), 330–345 (SVKEDTTPTERERDSG), and 450–464 (LEGHRDIEQNRKIPM). The segment covering 734–748 (SKDKGCKDMGGHTED) has biased composition (basic and acidic residues). In terms of domain architecture, Protein kinase spans 1044-1307 (WTKGEILGRG…ALQLLKHSFL (264 aa)). Residues 1050–1058 (LGRGAYGTV) and Lys1072 each bind ATP. The active-site Proton acceptor is Asp1169.

This sequence belongs to the protein kinase superfamily. STE Ser/Thr protein kinase family. STE20 subfamily.

It carries out the reaction L-seryl-[protein] + ATP = O-phospho-L-seryl-[protein] + ADP + H(+). The catalysed reaction is L-threonyl-[protein] + ATP = O-phospho-L-threonyl-[protein] + ADP + H(+). The polypeptide is Mitogen-activated protein kinase kinase kinase 19 (Map3k19) (Mus musculus (Mouse)).